A 59-amino-acid chain; its full sequence is Protein translocase subunit SecE (59 aa).

The helical transmembrane segment at 37–57 (LIVLLFVGLLAFLVQLAFSIL) threads the bilayer.

This sequence belongs to the SecE/SEC61-gamma family. In terms of assembly, component of the Sec protein translocase complex. Heterotrimer consisting of SecY (alpha), SecG (beta) and SecE (gamma) subunits. The heterotrimers can form oligomers, although 1 heterotrimer is thought to be able to translocate proteins. Interacts with the ribosome. May interact with SecDF, and other proteins may be involved.

It is found in the cell membrane. Functionally, essential subunit of the Sec protein translocation channel SecYEG. Clamps together the 2 halves of SecY. May contact the channel plug during translocation. The polypeptide is Protein translocase subunit SecE (Metallosphaera sedula (strain ATCC 51363 / DSM 5348 / JCM 9185 / NBRC 15509 / TH2)).